The primary structure comprises 67 residues: Small ribosomal subunit protein eS17 (67 aa).

It belongs to the eukaryotic ribosomal protein eS17 family. In terms of assembly, part of the 30S ribosomal subunit.

This chain is Small ribosomal subunit protein eS17, found in Pyrococcus furiosus (strain ATCC 43587 / DSM 3638 / JCM 8422 / Vc1).